Here is a 276-residue protein sequence, read N- to C-terminus: Rhomboid protease GlpG (276 aa).

6 helical membrane-spanning segments follow: residues G94–I114, I142–G162, L169–Q189, F192–W212, L229–M249, and A250–L270. Residue S201 is the Nucleophile of the active site. The active site involves H254.

This sequence belongs to the peptidase S54 family.

Its subcellular location is the cell inner membrane. The enzyme catalyses Cleaves type-1 transmembrane domains using a catalytic dyad composed of serine and histidine that are contributed by different transmembrane domains.. Its function is as follows. Rhomboid-type serine protease that catalyzes intramembrane proteolysis. The protein is Rhomboid protease GlpG of Salmonella paratyphi A (strain ATCC 9150 / SARB42).